The primary structure comprises 130 residues: MTRSSVLADALNAINNAEKTGKRQVLIRPSSKVIIKFLQVMQRHGYIGEFEYIDDHRSGKIVVQLNGRLNKCGVISPRFNVKIGDIEKWTANLLPARQFGYVILTTSAGIMDHEEARRKHVSGKILGFVY.

The protein belongs to the universal ribosomal protein uS8 family.

In Candida glabrata (strain ATCC 2001 / BCRC 20586 / JCM 3761 / NBRC 0622 / NRRL Y-65 / CBS 138) (Yeast), this protein is Small ribosomal subunit protein uS8 (RPS22).